We begin with the raw amino-acid sequence, 115 residues long: Large ribosomal subunit protein P2z (115 aa).

The disordered stretch occupies residues 62 to 115 (LASVPSGGGGGVAVASATSGGGGGGGAPAAESKKEEKKEEKEESDDDMGFSLFE). A compositionally biased stretch (basic and acidic residues) spans 92-102 (ESKKEEKKEEK). Ser105 is modified (phosphoserine).

Belongs to the eukaryotic ribosomal protein P1/P2 family. P1 and P2 exist as dimers at the large ribosomal subunit. Phosphorylated.

Its function is as follows. Plays an important role in the elongation step of protein synthesis. This chain is Large ribosomal subunit protein P2z (RPP2A), found in Arabidopsis thaliana (Mouse-ear cress).